A 200-amino-acid chain; its full sequence is Holliday junction branch migration complex subunit RuvA (200 aa).

The segment at 1–65 is domain I; it reads MYEYIKGTLT…ETEHVLYGFS (65 aa). Positions 66–144 are domain II; the sequence is SRAEKECFRL…TLMPLYLEEP (79 aa). The segment at 145-149 is flexible linker; it reads VVPSS. The interval 150-200 is domain III; the sequence is TANSSFKEGIGALMNLGFSRLAADRMMTEAVKELSEEASVAELLPIALRKS.

The protein belongs to the RuvA family. Homotetramer. Forms an RuvA(8)-RuvB(12)-Holliday junction (HJ) complex. HJ DNA is sandwiched between 2 RuvA tetramers; dsDNA enters through RuvA and exits via RuvB. An RuvB hexamer assembles on each DNA strand where it exits the tetramer. Each RuvB hexamer is contacted by two RuvA subunits (via domain III) on 2 adjacent RuvB subunits; this complex drives branch migration. In the full resolvosome a probable DNA-RuvA(4)-RuvB(12)-RuvC(2) complex forms which resolves the HJ.

It is found in the cytoplasm. In terms of biological role, the RuvA-RuvB-RuvC complex processes Holliday junction (HJ) DNA during genetic recombination and DNA repair, while the RuvA-RuvB complex plays an important role in the rescue of blocked DNA replication forks via replication fork reversal (RFR). RuvA specifically binds to HJ cruciform DNA, conferring on it an open structure. The RuvB hexamer acts as an ATP-dependent pump, pulling dsDNA into and through the RuvAB complex. HJ branch migration allows RuvC to scan DNA until it finds its consensus sequence, where it cleaves and resolves the cruciform DNA. This Chlamydia trachomatis serovar A (strain ATCC VR-571B / DSM 19440 / HAR-13) protein is Holliday junction branch migration complex subunit RuvA.